The primary structure comprises 371 residues: Aldose sugar dehydrogenase YliI (371 aa).

A signal peptide spans 1 to 20 (MHRQSFFLVPLICLSSALWA). Pyrroloquinoline quinone is bound at residue Gln-82. Catalysis depends on His-147, which acts as the Proton acceptor. The interval 214–215 (RN) is PQQ. Residues Glu-240 and Tyr-250 each coordinate Ca(2+). Residue Tyr-261 coordinates pyrroloquinoline quinone. 2 PQQ regions span residues 312 to 314 (ALK) and 341 to 343 (RIR).

This sequence belongs to the PQQ oxidoreductase GdhB family. Monomer. Ca(2+) is required as a cofactor. Pyrroloquinoline quinone serves as cofactor.

It localises to the cell outer membrane. Functionally, aldose sugar dehydrogenase with broad substrate specificity. The physiological substrate is unknown. Can oxidize glucose to gluconolactone. Can also utilize D-arabinose, L-arabinose and 2-deoxy-glucose. Has higher activity towards oligomeric sugars, such as maltose, maltotriose or cellobiose. It may function to input sugar-derived electrons into the respiratory network. The chain is Aldose sugar dehydrogenase YliI (yliI) from Escherichia coli (strain K12).